The chain runs to 306 residues: Enoyl-CoA isomerase/hydratase MYCGRDRAFT_76805 (306 aa).

Residues 103 to 107 (AGADL) and Gly-150 contribute to the substrate site.

This sequence belongs to the enoyl-CoA hydratase/isomerase family.

The enzyme catalyses a (3S)-3-hydroxyacyl-CoA = a (2E)-enoyl-CoA + H2O. The catalysed reaction is a 4-saturated-(3S)-3-hydroxyacyl-CoA = a (3E)-enoyl-CoA + H2O. It functions in the pathway siderophore biosynthesis. Functionally, enoyl-CoA isomerase/hydratase involved in the biosynthesis of a ferrichrome A-like siderophore which may contribute to organismal virulence. The first step of siderophore biosynthesis is performed by the HMG-CoA synthase (HMGS) MYCGRDRAFT_54740 which catalyzes the generation of HMG-CoA and CoA using acetoacetyl-CoA and acetyl-CoA as substrates. The enoyl-CoA isomerase/hydratase MYCGRDRAFT_76805 then catalyzes the conversion of HMG-CoA to methylglutaconyl-CoA. The acyltransferase MYCGRDRAFT_85486 then fuses methylglutaconyl-CoA with hydroxyornithine to yield methylglutaconyl hydroxyornithine. Methylglutaconyl hydroxyornithine is then available for use by the nonribosomal peptide synthetase NRPS2 to generate the ferrichrome A-like siderophore. The chain is Enoyl-CoA isomerase/hydratase MYCGRDRAFT_76805 from Zymoseptoria tritici (strain CBS 115943 / IPO323) (Speckled leaf blotch fungus).